The primary structure comprises 225 residues: Peptidyl-tRNA hydrolase (225 aa).

Tyrosine 14 serves as a coordination point for tRNA. Histidine 19 (proton acceptor) is an active-site residue. Residues phenylalanine 64, asparagine 66, and asparagine 112 each coordinate tRNA. A disordered region spans residues alanine 184–arginine 225. The span at alanine 198–alanine 209 shows a compositional bias: low complexity. The span at proline 211–arginine 225 shows a compositional bias: basic and acidic residues.

The protein belongs to the PTH family. Monomer.

It localises to the cytoplasm. It catalyses the reaction an N-acyl-L-alpha-aminoacyl-tRNA + H2O = an N-acyl-L-amino acid + a tRNA + H(+). Functionally, hydrolyzes ribosome-free peptidyl-tRNAs (with 1 or more amino acids incorporated), which drop off the ribosome during protein synthesis, or as a result of ribosome stalling. Catalyzes the release of premature peptidyl moieties from peptidyl-tRNA molecules trapped in stalled 50S ribosomal subunits, and thus maintains levels of free tRNAs and 50S ribosomes. The polypeptide is Peptidyl-tRNA hydrolase (Cereibacter sphaeroides (strain ATCC 17023 / DSM 158 / JCM 6121 / CCUG 31486 / LMG 2827 / NBRC 12203 / NCIMB 8253 / ATH 2.4.1.) (Rhodobacter sphaeroides)).